The sequence spans 571 residues: MSNKKTFKKYSRVAGLLTAALIIGNLVTANAESNKQNTASTETTTTNEQPKPESSELTTEKAGQKTDDMLNSNDMIKLAPKEMPLESAEKEEKKSEDKKKSEEDHTEEINDKIYSLNYNELEVLAKNGETIENFVPKEGVKKADKFIVIERKKKNINTTPVDISIIDSVTDRTYPAALQLANKGFTENKPDAVVTKRNPQKIHIDLPGMGDKATVEVNDPTYANVSTAIDNLVNQWHDNYSGGNTLPARTQYTESMVYSKSQIEAALNVNSKILDGTLGIDFKSISKGEKKVMIAAYKQIFYTVSANLPNNPADVFDKSVTFKELQRKGVSNEAPPLFVSNVAYGRTVFVKLETSSKSNDVEAAFSAALKGTDVKTNGKYSDILENSSFTAVVLGGDAAEHNKVVTKDFDVIRNVIKDNATFSRKNPAYPISYTSVFLKNNKIAGVNNRTEYVETTSTEYTSGKINLSHRGAYVAQYEILWDEINYDDKGKEVITKRRWDNNWYSKTSPFSTVIPLGANSRNIRIMARECTGLAWEWWRKVIDERDVKLSKEINVNISGSTLSPYGSITYK.

The N-terminal stretch at 1-33 is a signal peptide; it reads MSNKKTFKKYSRVAGLLTAALIIGNLVTANAES. A disordered region spans residues 30–108; sequence NAESNKQNTA…KKSEEDHTEE (79 aa). The segment covering 37 to 48 has biased composition (low complexity); it reads NTASTETTTTNE. Basic and acidic residues-rich tracts occupy residues 50–68 and 79–108; these read PKPE…KTDD and APKE…HTEE. Transmembrane regions (beta stranded) follow at residues 260–273, 280–289, 358–367, and 375–387; these read KSQI…NSKI, IDFKSISKGE, SNDVEAAFSA, and KTNG…LENS. The Conserved undecapeptide motif lies at 529–539; it reads ECTGLAWEWWR. Positions 561–562 match the Cholesterol binding motif; that stretch reads TL.

Belongs to the cholesterol-dependent cytolysin family. Homooligomeric pore complex of 35 to 50 subunits; when inserted in the host membrane.

It localises to the secreted. It is found in the host cell membrane. In terms of biological role, a cholesterol-dependent toxin that causes cytolysis by forming pores in cholesterol containing host membranes. After binding to target membranes, the protein undergoes a major conformation change, leading to its insertion in the host membrane and formation of an oligomeric pore complex. Cholesterol is required for binding to host membranes, membrane insertion and pore formation; cholesterol binding is mediated by a Thr-Leu pair in the C-terminus. Can be reversibly inactivated by oxidation. This chain is Streptolysin O (slo), found in Streptococcus pyogenes serotype M18 (strain MGAS8232).